The primary structure comprises 1188 residues: DNA-directed RNA polymerase subunit beta (1188 aa).

The protein belongs to the RNA polymerase beta chain family. As to quaternary structure, the RNAP catalytic core consists of 2 alpha, 1 beta, 1 beta' and 1 omega subunit. When a sigma factor is associated with the core the holoenzyme is formed, which can initiate transcription.

The catalysed reaction is RNA(n) + a ribonucleoside 5'-triphosphate = RNA(n+1) + diphosphate. In terms of biological role, DNA-dependent RNA polymerase catalyzes the transcription of DNA into RNA using the four ribonucleoside triphosphates as substrates. This chain is DNA-directed RNA polymerase subunit beta, found in Streptococcus gordonii (strain Challis / ATCC 35105 / BCRC 15272 / CH1 / DL1 / V288).